The sequence spans 277 residues: Glycerol-3-phosphate acyltransferase (277 aa).

Helical transmembrane passes span 3–23 (LFIFLILVGYLMGSINSAIIV), 55–75 (IMVMVFDALKGILPVILAKLL), 79–99 (PVTVAFTALAAVVGHMYPVFF), 111–131 (IGALLAFHFVIGVMVAATWLL), and 155–175 (LILVGNLNIFPPLFMITILVL). Residues 207–277 (SPATSAEQEF…PKTKTVKEKE (71 aa)) are disordered. A compositionally biased stretch (basic and acidic residues) spans 216–239 (FPGKEVIDTNIDETEKTEQAEAVK). Composition is skewed to basic residues over residues 240–253 (KPKVKKATTKAKKT) and 262–271 (KPKSTKPKTK).

This sequence belongs to the PlsY family. Probably interacts with PlsX.

It is found in the cell inner membrane. It carries out the reaction an acyl phosphate + sn-glycerol 3-phosphate = a 1-acyl-sn-glycero-3-phosphate + phosphate. It functions in the pathway lipid metabolism; phospholipid metabolism. In terms of biological role, catalyzes the transfer of an acyl group from acyl-phosphate (acyl-PO(4)) to glycerol-3-phosphate (G3P) to form lysophosphatidic acid (LPA). This enzyme utilizes acyl-phosphate as fatty acyl donor, but not acyl-CoA or acyl-ACP. In Legionella pneumophila (strain Corby), this protein is Glycerol-3-phosphate acyltransferase.